Here is a 110-residue protein sequence, read N- to C-terminus: Carboxysome shell protein CsoS1B (110 aa).

In terms of domain architecture, BMC spans 8–93 (ALGMIETRGL…VHSEVEIILP (86 aa)).

It belongs to the bacterial microcompartments protein family. CsoS1 subfamily. In terms of assembly, homohexamer with a small central pore. Interacts with the N-terminus (residues 1-136) of RuBisCO (CbbL).

It localises to the carboxysome. In terms of biological role, one of shell proteins of the carboxysome, a polyhedral inclusion where RuBisCO (ribulose bisphosphate carboxylase, ccbL-ccbS) is sequestered. Assembles into hexamers which make sheets that form the facets of the polyhedral carboxysome. The shell probably limits the diffusion of CO(2) into and out of the carboxysome. There are estimated to be 540 CsoS1B proteins per carboxysome. Functionally, unlike beta-carboxysomes, alpha-carboxysomes (Cb) can form without cargo protein. CsoS2 is essential for Cb formation and is also capable of targeting foreign proteins to the Cb. The Cb shell assembles with the aid of CsoS2; CsoS1A, CsoS1B and CsoS1C form the majority of the shell while CsoS4A and CsoS4B form vertices. CsoS1D forms pseudohexamers that probably control metabolite flux into and out of the shell. This is Carboxysome shell protein CsoS1B from Halothiobacillus neapolitanus (strain ATCC 23641 / c2) (Thiobacillus neapolitanus).